Consider the following 476-residue polypeptide: G-patch domain and KOW motifs-containing protein (476 aa).

The interval 1–96 (MADSKEGVLP…PGPSTDTGAL (96 aa)) is disordered. N-acetylalanine is present on A2. Residue K5 forms a Glycyl lysine isopeptide (Lys-Gly) (interchain with G-Cter in SUMO2) linkage. Residues 13–26 (AASTAPISFGFTRT) are compositionally biased toward polar residues. At S27 the chain carries Phosphoserine; by PKA. Residues S35 and S42 each carry the phosphoserine modification. The segment covering 43–58 (PEEKDFLKTVEGRELQ) has biased composition (basic and acidic residues). The residue at position 115 (S115) is a Phosphoserine. Residues 164–210 (VEAYGLAMLRGMGWKPGEGIGRTFNQVVKPRVNSLRPKGLGLGANLT) enclose the G-patch domain. A disordered region spans residues 203–244 (LGLGANLTEAQALTPTGPSRMPRPDEEQEKDKEDQPQGLVPG). Positions 210–219 (TEAQALTPTG) are enriched in polar residues. The residue at position 216 (T216) is a Phosphothreonine. Residues 224–237 (PRPDEEQEKDKEDQ) are compositionally biased toward basic and acidic residues. The region spanning 240–267 (GLVPGGAVVVLSGPHRGLYGKVEGLDPD) is the KOW 1 domain. Phosphothreonine; by PKA is present on T316. The disordered stretch occupies residues 327 to 353 (DNSERKRKHLPDRQDGPAAKSEKAAPR). Over residues 337 to 351 (PDRQDGPAAKSEKAA) the composition is skewed to basic and acidic residues. The KOW 2 domain occupies 415-442 (PKAEGDRVMVVLGPQTGRVGHLLSRDRA). The residue at position 471 (S471) is a Phosphoserine. T473 is modified (phosphothreonine).

Belongs to the MOS2 family. As to quaternary structure, component of the minor spliceosome, which splices U12-type introns. Interacts with PRKX. Interacts with DHX16. Interacts with PRKACB. Phosphorylation regulates its ability to bind RNA.

The protein resides in the nucleus. Functionally, RNA-binding protein involved in pre-mRNA splicing. As a component of the minor spliceosome, involved in the splicing of U12-type introns in pre-mRNAs. This Homo sapiens (Human) protein is G-patch domain and KOW motifs-containing protein (GPKOW).